Reading from the N-terminus, the 741-residue chain is NAD(P)H-quinone oxidoreductase subunit 5, chloroplastic (741 aa).

Helical transmembrane passes span 9 to 29, 40 to 60, 89 to 109, 125 to 145, 147 to 167, 185 to 205, 219 to 239, 258 to 278, 284 to 304, 327 to 347, 354 to 374, 396 to 416, 425 to 445, 549 to 569, 605 to 625, and 721 to 741; these read WIIP…LLLF, WAFQ…NLSI, IDPL…MVLI, FAYM…SNLI, IYIF…FWFT, GDFG…SFEF, NEVN…GAIA, TPIS…FPVA, FIVI…TVFF, LGYM…FHLI, ALLF…VGYC, NSFL…CFWS, WLYS…TAFY, LFPI…GIPF, VFSV…YKPV, and YLFF…FLNL.

The protein belongs to the complex I subunit 5 family. As to quaternary structure, NDH is composed of at least 16 different subunits, 5 of which are encoded in the nucleus.

The protein resides in the plastid. It is found in the chloroplast thylakoid membrane. The catalysed reaction is a plastoquinone + NADH + (n+1) H(+)(in) = a plastoquinol + NAD(+) + n H(+)(out). The enzyme catalyses a plastoquinone + NADPH + (n+1) H(+)(in) = a plastoquinol + NADP(+) + n H(+)(out). In terms of biological role, NDH shuttles electrons from NAD(P)H:plastoquinone, via FMN and iron-sulfur (Fe-S) centers, to quinones in the photosynthetic chain and possibly in a chloroplast respiratory chain. The immediate electron acceptor for the enzyme in this species is believed to be plastoquinone. Couples the redox reaction to proton translocation, and thus conserves the redox energy in a proton gradient. This is NAD(P)H-quinone oxidoreductase subunit 5, chloroplastic (ndhF) from Guizotia abyssinica (Niger).